Consider the following 346-residue polypeptide: Phosphoribosylformylglycinamidine cyclo-ligase (346 aa).

This sequence belongs to the AIR synthase family.

The protein resides in the cytoplasm. The catalysed reaction is 2-formamido-N(1)-(5-O-phospho-beta-D-ribosyl)acetamidine + ATP = 5-amino-1-(5-phospho-beta-D-ribosyl)imidazole + ADP + phosphate + H(+). The protein operates within purine metabolism; IMP biosynthesis via de novo pathway; 5-amino-1-(5-phospho-D-ribosyl)imidazole from N(2)-formyl-N(1)-(5-phospho-D-ribosyl)glycinamide: step 2/2. The polypeptide is Phosphoribosylformylglycinamidine cyclo-ligase (Bacillus pumilus (strain SAFR-032)).